We begin with the raw amino-acid sequence, 120 residues long: UPF0231 protein KPN78578_01240 (120 aa).

It belongs to the UPF0231 family.

The chain is UPF0231 protein KPN78578_01240 from Klebsiella pneumoniae subsp. pneumoniae (strain ATCC 700721 / MGH 78578).